We begin with the raw amino-acid sequence, 324 residues long: Endochitinase B (324 aa).

The first 23 residues, 1-23, serve as a signal peptide directing secretion; it reads MRLREFTALSSLLFSLLLLSASA. The region spanning 24-65 is the Chitin-binding type-1 domain; the sequence is EQCGSQAGGARCASGLCCSKFGWCGNTNDYCGPGNCQSQCPG. Disulfide bonds link Cys-26–Cys-41, Cys-35–Cys-47, Cys-40–Cys-54, and Cys-59–Cys-63. 2 positions are modified to 4-hydroxyproline: Pro-67 and Pro-69. Disulfide bonds link Cys-96–Cys-158, Cys-170–Cys-178, and Cys-277–Cys-309. Residue Glu-140 is the Proton donor of the active site. Positions 318–324 are cleaved as a propeptide — removed in mature form; sequence GLLVDTM.

Belongs to the glycosyl hydrolase 19 family. Chitinase class I subfamily. Post-translationally, the 4-hydroxyproline residues are not glycosylated in this plant vacuolar protein.

The protein localises to the vacuole. The enzyme catalyses Random endo-hydrolysis of N-acetyl-beta-D-glucosaminide (1-&gt;4)-beta-linkages in chitin and chitodextrins.. Its function is as follows. Defense against chitin-containing fungal pathogens. The polypeptide is Endochitinase B (CHN50) (Nicotiana tabacum (Common tobacco)).